A 126-amino-acid polypeptide reads, in one-letter code: uncharacterized protein (126 aa).

An N-terminal signal peptide occupies residues 1 to 27; it reads MKNLFIFLSLMMMFVLTACGGSKYDDA. A disordered region spans residues 93–126; it reads MTDMPGNGENDRLGLSKKTPDYEEVKGEETELEE. A compositionally biased stretch (basic and acidic residues) spans 101–126; it reads ENDRLGLSKKTPDYEEVKGEETELEE.

This is an uncharacterized protein from Bacillus subtilis (strain 168).